The chain runs to 215 residues: Cytochrome b6 (215 aa).

A helical membrane pass occupies residues 32-52; sequence IFYCLGGITLTCFLVQVATGF. Cys35 is a heme c binding site. 2 residues coordinate heme b: His86 and His100. The next 3 helical transmembrane spans lie at 90–110, 116–136, and 186–206; these read ASMM…TGGF, LTWI…VTGY, and LHTF…FLMI. His187 and His202 together coordinate heme b.

The protein belongs to the cytochrome b family. PetB subfamily. The 4 large subunits of the cytochrome b6-f complex are cytochrome b6, subunit IV (17 kDa polypeptide, PetD), cytochrome f and the Rieske protein, while the 4 small subunits are PetG, PetL, PetM and PetN. The complex functions as a dimer. Requires heme b as cofactor. It depends on heme c as a cofactor.

It is found in the plastid. Its subcellular location is the chloroplast thylakoid membrane. Component of the cytochrome b6-f complex, which mediates electron transfer between photosystem II (PSII) and photosystem I (PSI), cyclic electron flow around PSI, and state transitions. This is Cytochrome b6 from Psilotum nudum (Whisk fern).